Here is a 178-residue protein sequence, read N- to C-terminus: ATP synthase subunit delta (178 aa).

Belongs to the ATPase delta chain family. As to quaternary structure, F-type ATPases have 2 components, F(1) - the catalytic core - and F(0) - the membrane proton channel. F(1) has five subunits: alpha(3), beta(3), gamma(1), delta(1), epsilon(1). F(0) has three main subunits: a(1), b(2) and c(10-14). The alpha and beta chains form an alternating ring which encloses part of the gamma chain. F(1) is attached to F(0) by a central stalk formed by the gamma and epsilon chains, while a peripheral stalk is formed by the delta and b chains.

It is found in the cell inner membrane. In terms of biological role, f(1)F(0) ATP synthase produces ATP from ADP in the presence of a proton or sodium gradient. F-type ATPases consist of two structural domains, F(1) containing the extramembraneous catalytic core and F(0) containing the membrane proton channel, linked together by a central stalk and a peripheral stalk. During catalysis, ATP synthesis in the catalytic domain of F(1) is coupled via a rotary mechanism of the central stalk subunits to proton translocation. This protein is part of the stalk that links CF(0) to CF(1). It either transmits conformational changes from CF(0) to CF(1) or is implicated in proton conduction. The sequence is that of ATP synthase subunit delta from Methylococcus capsulatus (strain ATCC 33009 / NCIMB 11132 / Bath).